A 429-amino-acid polypeptide reads, in one-letter code: MSSIIDIFAREILDSRGNPTVEVEVELDSGAVGRAAVPSGASTGAFEAVELRDGDKSRYLGKGVLKAVQNVNDIIAPELIGMEAQDQVAIDKAMIELDGTPNKSKLGANAILGVSLAVAKAAAEECGLPLYQYIGGVNAKTLPVPMMNILNGGKHADNNVDIQEFMIMPVGAPNFREALRMCSEVYHNLKNVLHSKGLSTTVGDEGGFAPNLTSNEEAIQVILEAIEKAGYVPGEDIVLALDPASTELYKEDGKYHFEGEGIVRTPEEMVDFWEQLVNKYPIVSIEDGLAEEDWNGWKLLTERLGKKIQLVGDDLFVTNTQRLSKGISMGVANSILIKLNQIGTLTETLDAIEMAKRAGYTAVVSHRSGETEDSTIADLVVGVNAGQIKTGAPARTDRVVKYNQLLRIEEALGSTAQYLGKNAFYNIKK.

Q163 provides a ligand contact to (2R)-2-phosphoglycerate. Catalysis depends on E205, which acts as the Proton donor. Positions 242, 286, and 313 each coordinate Mg(2+). (2R)-2-phosphoglycerate is bound by residues K338, R367, S368, and K389. The active-site Proton acceptor is K338.

This sequence belongs to the enolase family. The cofactor is Mg(2+).

The protein localises to the cytoplasm. It localises to the secreted. The protein resides in the cell surface. It carries out the reaction (2R)-2-phosphoglycerate = phosphoenolpyruvate + H2O. The protein operates within carbohydrate degradation; glycolysis; pyruvate from D-glyceraldehyde 3-phosphate: step 4/5. In terms of biological role, catalyzes the reversible conversion of 2-phosphoglycerate (2-PG) into phosphoenolpyruvate (PEP). It is essential for the degradation of carbohydrates via glycolysis. This Thermoanaerobacter pseudethanolicus (strain ATCC 33223 / 39E) (Clostridium thermohydrosulfuricum) protein is Enolase.